A 396-amino-acid chain; its full sequence is Tryptophan synthase beta chain (396 aa).

Lys-86 carries the N6-(pyridoxal phosphate)lysine modification.

The protein belongs to the TrpB family. In terms of assembly, tetramer of two alpha and two beta chains. Pyridoxal 5'-phosphate is required as a cofactor.

It carries out the reaction (1S,2R)-1-C-(indol-3-yl)glycerol 3-phosphate + L-serine = D-glyceraldehyde 3-phosphate + L-tryptophan + H2O. Its pathway is amino-acid biosynthesis; L-tryptophan biosynthesis; L-tryptophan from chorismate: step 5/5. Functionally, the beta subunit is responsible for the synthesis of L-tryptophan from indole and L-serine. The protein is Tryptophan synthase beta chain of Aliivibrio fischeri (strain ATCC 700601 / ES114) (Vibrio fischeri).